The following is a 142-amino-acid chain: MAAMTVQLDIVSAESSIFSGRVASLQVTGSEGELGIMHGHAPLLSYIKPGMARIVKQDGSEEVFYLSGGLLEVQPSSVSVLADVVMRAKDIDEQAALEAKRRAEAHMATAGADFNYDAAMVELAKAMAQLRVVETIKKNIAR.

This sequence belongs to the ATPase epsilon chain family. In terms of assembly, F-type ATPases have 2 components, CF(1) - the catalytic core - and CF(0) - the membrane proton channel. CF(1) has five subunits: alpha(3), beta(3), gamma(1), delta(1), epsilon(1). CF(0) has three main subunits: a, b and c.

The protein localises to the cell inner membrane. Its function is as follows. Produces ATP from ADP in the presence of a proton gradient across the membrane. The chain is ATP synthase epsilon chain from Shewanella sp. (strain ANA-3).